The chain runs to 63 residues: Large ribosomal subunit protein uL29 (63 aa).

It belongs to the universal ribosomal protein uL29 family.

This is Large ribosomal subunit protein uL29 from Bordetella avium (strain 197N).